The chain runs to 191 residues: Flavin reductase (NADH) (191 aa).

Residue 46–52 coordinates FAD; sequence YGLTCSA. Ser-55 contacts NAD(+). 72 to 73 is a binding site for FAD; the sequence is RV. Residues His-144 and 166-169 contribute to the NAD(+) site; that span reads YWRR.

It belongs to the non-flavoprotein flavin reductase family.

It carries out the reaction a reduced flavin + NAD(+) = an oxidized flavin + NADH + 2 H(+). Its function is as follows. Catalyzes the reduction of flavin by NADH. Subsequently, the reduced flavins is transferred to the tetracycline 7-halogenase CtcP. This is Flavin reductase (NADH) from Kitasatospora aureofaciens (Streptomyces aureofaciens).